A 142-amino-acid chain; its full sequence is Hemoglobin subunit alpha-5 (142 aa).

Positions 2–142 (TFSSAEKAAI…VSAVLVSKYR (141 aa)) constitute a Globin domain. H59 is an O2 binding site. H88 contacts heme b.

It belongs to the globin family. In terms of assembly, heterotetramer of two alpha chains and two beta chains. As to expression, red blood cells.

Its function is as follows. This is a larval (tadpole) alpha-globin. In Xenopus laevis (African clawed frog), this protein is Hemoglobin subunit alpha-5 (hba5).